The chain runs to 64 residues: MPKIKTHRGAAKRFKKTGTGKFRTKHAFLSHILEKKSAKRKRRLRKKFVLSAGDVRRIRAMIPY.

Belongs to the bacterial ribosomal protein bL35 family.

The chain is Large ribosomal subunit protein bL35 from Desulforudis audaxviator (strain MP104C).